Reading from the N-terminus, the 108-residue chain is Trp operon repressor homolog (108 aa).

The DNA-binding element occupies 59 to 82 (QRQISQLLGVGVATITRGSNELKS).

It belongs to the TrpR family. Homodimer.

The protein resides in the cytoplasm. Its function is as follows. This protein is an aporepressor. When complexed with L-tryptophan it binds the operator region of the trp operon and prevents the initiation of transcription. In Aliivibrio fischeri (strain MJ11) (Vibrio fischeri), this protein is Trp operon repressor homolog.